Reading from the N-terminus, the 229-residue chain is Putative N-acetylmannosamine-6-phosphate 2-epimerase (229 aa).

This sequence belongs to the NanE family.

It catalyses the reaction an N-acyl-D-glucosamine 6-phosphate = an N-acyl-D-mannosamine 6-phosphate. Its pathway is amino-sugar metabolism; N-acetylneuraminate degradation; D-fructose 6-phosphate from N-acetylneuraminate: step 3/5. Its function is as follows. Converts N-acetylmannosamine-6-phosphate (ManNAc-6-P) to N-acetylglucosamine-6-phosphate (GlcNAc-6-P). The protein is Putative N-acetylmannosamine-6-phosphate 2-epimerase of Escherichia coli O157:H7.